We begin with the raw amino-acid sequence, 351 residues long: MTIKVLVVDDSALIRNLLGKMIEADSELSLVGMAADAYMAKDMVNQHRPDVITLDIEMPKVDGLTFLDRLMKARPTAVVMISSLTEEGADATFNALALGAVDFIPKPKLDSPQDFNEYQDLILEKIKSAAHAKLKTQRAAPAVVVQPSHKPALSNRVINTQLVAIGASTGGTEAILSLLQQFPAVMPPIVITQHMPPGFTRTFAERLNKLTRLNVKQAEDGERLLPCYVYIAPGDQHLEVIKVGGSFKTRLTQGDKVSGHRPSVDVLFNSVAECAGANTTAAILTGMGKDGADGMALIDEQGGKTFAQGEQSCVVFGMPREAIKRGVIHHVVELPQLADKMLNYLASLKRD.

The region spanning 4-121 (KVLVVDDSAL…PQDFNEYQDL (118 aa)) is the Response regulatory domain. A 4-aspartylphosphate modification is found at Asp-55. Residues 156-348 (RVINTQLVAI…DKMLNYLASL (193 aa)) form the CheB-type methylesterase domain. Residues Ser-168, His-194, and Asp-290 contribute to the active site.

The protein belongs to the CheB family. Post-translationally, phosphorylated by CheA. Phosphorylation of the N-terminal regulatory domain activates the methylesterase activity.

The protein localises to the cytoplasm. It carries out the reaction [protein]-L-glutamate 5-O-methyl ester + H2O = L-glutamyl-[protein] + methanol + H(+). The catalysed reaction is L-glutaminyl-[protein] + H2O = L-glutamyl-[protein] + NH4(+). In terms of biological role, involved in chemotaxis. Part of a chemotaxis signal transduction system that modulates chemotaxis in response to various stimuli. Catalyzes the demethylation of specific methylglutamate residues introduced into the chemoreceptors (methyl-accepting chemotaxis proteins or MCP) by CheR. Also mediates the irreversible deamidation of specific glutamine residues to glutamic acid. The sequence is that of Protein-glutamate methylesterase/protein-glutamine glutaminase 2 from Shewanella sp. (strain MR-7).